Here is a 252-residue protein sequence, read N- to C-terminus: Chitooligosaccharide deacetylase (252 aa).

Mg(2+) is bound by residues H61 and H125.

Belongs to the YdjC deacetylase family. ChbG subfamily. As to quaternary structure, homodimer. Requires Mg(2+) as cofactor.

The protein resides in the cytoplasm. It carries out the reaction N,N'-diacetylchitobiose + H2O = N-acetyl-beta-D-glucosaminyl-(1-&gt;4)-D-glucosamine + acetate. The enzyme catalyses diacetylchitobiose-6'-phosphate + H2O = N'-monoacetylchitobiose-6'-phosphate + acetate. It participates in glycan degradation; chitin degradation. In terms of biological role, involved in the degradation of chitin. ChbG is essential for growth on the acetylated chitooligosaccharides chitobiose and chitotriose but is dispensable for growth on cellobiose and chitosan dimer, the deacetylated form of chitobiose. Deacetylation of chitobiose-6-P and chitotriose-6-P is necessary for both the activation of the chb promoter by the regulatory protein ChbR and the hydrolysis of phosphorylated beta-glucosides by the phospho-beta-glucosidase ChbF. Catalyzes the removal of only one acetyl group from chitobiose-6-P to yield monoacetylchitobiose-6-P, the inducer of ChbR and the substrate of ChbF. This Salmonella typhimurium (strain LT2 / SGSC1412 / ATCC 700720) protein is Chitooligosaccharide deacetylase.